A 143-amino-acid polypeptide reads, in one-letter code: Large ribosomal subunit protein uL13 (143 aa).

It belongs to the universal ribosomal protein uL13 family. Part of the 50S ribosomal subunit.

Functionally, this protein is one of the early assembly proteins of the 50S ribosomal subunit, although it is not seen to bind rRNA by itself. It is important during the early stages of 50S assembly. The polypeptide is Large ribosomal subunit protein uL13 (Neisseria gonorrhoeae (strain ATCC 700825 / FA 1090)).